A 200-amino-acid polypeptide reads, in one-letter code: Probable nicotinate-nucleotide adenylyltransferase (200 aa).

Belongs to the NadD family.

The catalysed reaction is nicotinate beta-D-ribonucleotide + ATP + H(+) = deamido-NAD(+) + diphosphate. It functions in the pathway cofactor biosynthesis; NAD(+) biosynthesis; deamido-NAD(+) from nicotinate D-ribonucleotide: step 1/1. In terms of biological role, catalyzes the reversible adenylation of nicotinate mononucleotide (NaMN) to nicotinic acid adenine dinucleotide (NaAD). This Lachnoclostridium phytofermentans (strain ATCC 700394 / DSM 18823 / ISDg) (Clostridium phytofermentans) protein is Probable nicotinate-nucleotide adenylyltransferase.